Consider the following 144-residue polypeptide: Maximins 2/H8 type 2 (144 aa).

An N-terminal signal peptide occupies residues 1–18 (MNFKYIVAVSFLIASAYA). The propeptide occupies 19-43 (RSEENEIQSLSQRDVLEEESLREIR). An Asparagine amide modification is found at Asn-70. A propeptide spanning residues 74–123 (TAEEHEVMKRLETVMRDLDSLDYPEEASERETRGFNQEEIANLFTKKEKR) is cleaved from the precursor. Ile-143 is subject to Isoleucine amide.

The protein belongs to the bombinin family. Expressed by the skin glands.

It localises to the secreted. Maximin-2 shows antibacterial activity against both Gram-positive and Gram-negative bacteria. It also shows antimicrobial activity against the fungus C.albicans, but not against A.flavus nor P.uticale. It has little hemolytic activity. Functionally, maximin-H8 shows antimicrobial activity against bacteria and against the fungus C.albicans. Shows strong hemolytic activity. The protein is Maximins 2/H8 type 2 of Bombina maxima (Giant fire-bellied toad).